Consider the following 260-residue polypeptide: Transcription factor SUM-1 (260 aa).

In terms of domain architecture, bHLH spans 112-163; the sequence is DKRKAATLRERRRLRKVNEAFEALKRHTCANPNQRLPKVEILRNAIEYIEKL. The tract at residues 171-208 is disordered; it reads KANGDSEMDSAETSSNTSDAMTDGSSPGSYSSDKAQQY. Residues 181-205 show a composition bias toward polar residues; sequence AETSSNTSDAMTDGSSPGSYSSDKA.

Efficient DNA binding requires dimerization with another bHLH protein. Homodimer, and heterodimer with the ubiquitous bHLH protein E12.

It is found in the nucleus. Functionally, regulatory factor during embryogenesis. Conversion of pluripotent secondary mesenchyme cells to myogenic cells. It binds to the MCK enhancer element. The chain is Transcription factor SUM-1 (SUM-1) from Lytechinus variegatus (Green sea urchin).